A 293-amino-acid polypeptide reads, in one-letter code: Small ribosomal subunit protein uS5 (293 aa).

Positions 1–56 (MADDAGAAGGPGGPGGPGMGGRGGFRGGFGSGVRGRGRGRGRGRGRGRGARGGKAE) are disordered. Alanine 2 is modified (N-acetylalanine). Positions 7 to 34 (AAGGPGGPGGPGMGGRGGFRGGFGSGVR) are enriched in gly residues. A compositionally biased stretch (basic residues) spans 35–51 (GRGRGRGRGRGRGRGAR). Residues lysine 54 and lysine 58 each participate in a glycyl lysine isopeptide (Lys-Gly) (interchain with G-Cter in ubiquitin) cross-link. The 64-residue stretch at 102-165 (LKDEVLKIMP…ILAKLSIVPV (64 aa)) folds into the S5 DRBM domain. Threonine 252 is subject to Phosphothreonine. Lysine 263 is modified (N6-acetyllysine). The residue at position 264 (serine 264) is a Phosphoserine. Threonine 270 is modified (phosphothreonine). Residue lysine 275 is modified to N6-acetyllysine; alternate. Lysine 275 participates in a covalent cross-link: Glycyl lysine isopeptide (Lys-Gly) (interchain with G-Cter in SUMO1); alternate. Residue lysine 275 forms a Glycyl lysine isopeptide (Lys-Gly) (interchain with G-Cter in SUMO2); alternate linkage. Lysine 275 participates in a covalent cross-link: Glycyl lysine isopeptide (Lys-Gly) (interchain with G-Cter in ubiquitin); alternate. Serine 281 is subject to Phosphoserine.

This sequence belongs to the universal ribosomal protein uS5 family. In terms of assembly, component of the small ribosomal subunit. Interacts with zinc finger protein ZNF277 (via zinc-finger domains); the interaction is direct; the interaction is extra-ribosomal. Interaction with ZNF277 competes with the binding of RPS2 to protein arginine methyltransferase PRMT3. Citrullinated by PADI4 in the Arg/Gly-rich region. Post-translationally, asymmetric arginine dimethylation by PRMT3 occurs at multiple sites in the Arg/Gly-rich region. In terms of processing, monoubiquitinated at Lys-54 and Lys-58 by RNF10 when a ribosome has stalled during translation, leading to its degradation by the proteasome. Deubiquitinated at Lys-54 and Lys-58 by USP10, preventing degradation by the proteasome and promoting 40S ribosome subunit recycling following ribosome dissociation.

The protein resides in the cytoplasm. The protein localises to the nucleus. It localises to the nucleolus. Functionally, component of the ribosome, a large ribonucleoprotein complex responsible for the synthesis of proteins in the cell. The small ribosomal subunit (SSU) binds messenger RNAs (mRNAs) and translates the encoded message by selecting cognate aminoacyl-transfer RNA (tRNA) molecules. The large subunit (LSU) contains the ribosomal catalytic site termed the peptidyl transferase center (PTC), which catalyzes the formation of peptide bonds, thereby polymerizing the amino acids delivered by tRNAs into a polypeptide chain. The nascent polypeptides leave the ribosome through a tunnel in the LSU and interact with protein factors that function in enzymatic processing, targeting, and the membrane insertion of nascent chains at the exit of the ribosomal tunnel. Plays a role in the assembly and function of the 40S ribosomal subunit. Mutations in this protein affects the control of translational fidelity. Involved in nucleolar processing of pre-18S ribosomal RNA and ribosome assembly. The protein is Small ribosomal subunit protein uS5 (RPS2) of Bos taurus (Bovine).